The chain runs to 919 residues: UPF0182 protein Tery_4385 (919 aa).

The next 7 membrane-spanning stretches (helical) occupy residues 6-26 (YIII…RTLV), 52-72 (IFLW…NYWI), 96-116 (IFVK…AATA), 160-180 (WLFT…ALKG), 198-218 (THIS…FWFE), 243-263 (FAYW…VLSV), and 268-288 (IIWP…FNVL).

The protein belongs to the UPF0182 family.

The protein resides in the cell membrane. In Trichodesmium erythraeum (strain IMS101), this protein is UPF0182 protein Tery_4385.